The following is a 462-amino-acid chain: Glycoprotein endo-alpha-1,2-mannosidase (462 aa).

Topologically, residues Met-1 to Cys-9 are cytoplasmic. A helical; Signal-anchor for type II membrane protein membrane pass occupies residues Ile-10–Trp-30. Topologically, residues Pro-31–Ser-462 are lumenal. Positions Asp-60–Ser-462 are catalytic.

Belongs to the glycosyl hydrolase 99 family. In terms of processing, undergoes proteolytic cleavage in the C-terminal region.

It localises to the golgi apparatus membrane. It carries out the reaction N-{alpha-Glc-(1-&gt;3)-alpha-Man-(1-&gt;2)-alpha-Man-(1-&gt;2)-alpha-Man-(1-&gt;3)-[alpha-Man-(1-&gt;2)-alpha-Man-(1-&gt;3)-[alpha-Man-(1-&gt;2)-alpha-Man-(1-&gt;6)]-alpha-Man-(1-&gt;6)]-beta-Man-(1-&gt;4)-beta-GlcNAc-(1-&gt;4)-beta-GlcNAc}-L-asparaginyl-[protein] + H2O = alpha-D-glucosyl-(1-&gt;3)-D-mannopyranose + N(4)-{alpha-D-Man-(1-&gt;2)-alpha-D-Man-(1-&gt;3)-[alpha-D-Man-(1-&gt;2)-alpha-D-Man-(1-&gt;3)-[alpha-D-Man-(1-&gt;2)-alpha-D-Man-(1-&gt;6)]-alpha-D-Man-(1-&gt;6)]-beta-D-Man-(1-&gt;4)-beta-D-GlaNAc-(1-&gt;4)-beta-D-GlcNAc}-L-asparaginyl-[protein] (N-glucan mannose isomer 8A1,2,3B1,2). The chain is Glycoprotein endo-alpha-1,2-mannosidase (Manea) from Mus musculus (Mouse).